Consider the following 346-residue polypeptide: Propane 2-monooxygenase, reductase component (346 aa).

Positions 5–94 constitute a 2Fe-2S ferredoxin-type domain; the sequence is HKISFEPVDI…DCEIELLNFD (90 aa). Cys39, Cys44, Cys46, and Cys78 together coordinate [2Fe-2S] cluster. One can recognise an FAD-binding FR-type domain in the interval 104–205; sequence IQDVTTKVAA…NGPYGSCTLR (102 aa).

It belongs to the bacterial ring-hydroxylating dioxygenase ferredoxin reductase family. The propane 2-monooxygenase multicomponent enzyme system is composed of an electron transfer component and a monooxygenase component interacting with the effector protein PrmD. The electron transfer component is composed of a reductase (PrmB), and the monooxygenase component is formed by a large subunit (PrmA) and a small subunit (PrmC). It depends on FAD as a cofactor. Requires [2Fe-2S] cluster as cofactor.

Its function is as follows. Reductase component of the propane 2-monooxygenase multicomponent enzyme system which is involved in the degradation of propane via the O2-dependent hydroxylation of propane. Reductase catalyzes the transfer of electrons from NADH or NADPH to monooxygenase. The chain is Propane 2-monooxygenase, reductase component from Gordonia sp. (strain TY-5).